Here is a 100-residue protein sequence, read N- to C-terminus: uncharacterized protein (100 aa).

A helical transmembrane segment spans residues 28 to 45 (VFLVFYIITMVKIYIFLI).

It is found in the membrane. This is an uncharacterized protein from Saccharomyces cerevisiae (strain ATCC 204508 / S288c) (Baker's yeast).